A 350-amino-acid polypeptide reads, in one-letter code: MEDLQLVLFVLGAIAIVAVLVHGFWSIRKQQPRTIKEQPRTPYAMSPGRRDAEGFDADGIGEVRVRKLAPDDKKSEPVKASHDDTFSLSDEPKVRRVKERQEPVLESRADAAPNHAAHERRGHDFRHHEEPSPSARQVQLGLLDDLDQEPSQGELYEEINASVADYDDDYDAYENQPASVDRAEAARVPADQGQAAHSAATQAEPQAKAEEPLPDPRDVLVLHVVAREGQVLAGAELLPCLLELNFKYGDMEIFHRHEDNAGNGKVLFSLANMLKPGTFDPDTMEQFNTHGIVLFMTLPCHGEAVMNFSLMLNSACQLADDLDALVLDGQRQLWSDATKAQYLARIRANA.

Residues 1 to 6 (MEDLQL) are Periplasmic-facing. A helical transmembrane segment spans residues 7–27 (VLFVLGAIAIVAVLVHGFWSI). Over 28 to 350 (RKQQPRTIKE…QYLARIRANA (323 aa)) the chain is Cytoplasmic. Disordered regions lie at residues 36–55 (KEQPRTPYAMSPGRRDAEGF), 65–136 (VRKL…PSAR), and 187–213 (RVPADQGQAAHSAATQAEPQAKAEEPL). Basic and acidic residues-rich tracts occupy residues 65–109 (VRKL…ESRA) and 116–131 (AAHERRGHDFRHHEEP).

This sequence belongs to the ZipA family. In terms of assembly, interacts with FtsZ via their C-terminal domains.

The protein resides in the cell inner membrane. Essential cell division protein that stabilizes the FtsZ protofilaments by cross-linking them and that serves as a cytoplasmic membrane anchor for the Z ring. Also required for the recruitment to the septal ring of downstream cell division proteins. The chain is Cell division protein ZipA from Shewanella amazonensis (strain ATCC BAA-1098 / SB2B).